A 214-amino-acid polypeptide reads, in one-letter code: Adenylate kinase (214 aa).

10 to 15 (GAGKGT) is an ATP binding site. The NMP stretch occupies residues 30-59 (STGDMFRDHKARGTEIGKQVQAIMDAGGLV). AMP is bound by residues Thr31, Arg36, 57–59 (GLV), 85–88 (GYPR), and Gln92. An LID region spans residues 126-163 (GRRSCPRCGAVYHVSQNPPHRAGFCDRDDAALVQREDD). Residue Arg127 coordinates ATP. Zn(2+) is bound by residues Cys130 and Cys133. 136 to 137 (VY) provides a ligand contact to ATP. Zn(2+)-binding residues include Cys150 and Asp153. AMP-binding residues include Arg160 and Arg171. Gly199 contacts ATP.

This sequence belongs to the adenylate kinase family. As to quaternary structure, monomer.

It localises to the cytoplasm. The enzyme catalyses AMP + ATP = 2 ADP. Its pathway is purine metabolism; AMP biosynthesis via salvage pathway; AMP from ADP: step 1/1. Its function is as follows. Catalyzes the reversible transfer of the terminal phosphate group between ATP and AMP. Plays an important role in cellular energy homeostasis and in adenine nucleotide metabolism. This Anaeromyxobacter dehalogenans (strain 2CP-1 / ATCC BAA-258) protein is Adenylate kinase.